The primary structure comprises 288 residues: General transcription factor IIE subunit 2 (288 aa).

Residues 16–56 (ALTTPAVEKRPSASSESSKKKRAKLELSSTSGSKPSSDGSN) form a disordered region. Low complexity predominate over residues 41 to 56 (ELSSTSGSKPSSDGSN). Positions 63 to 143 (SLSGSSGYKF…YAFKPKYNLK (81 aa)) form a DNA-binding region, TFIIE beta.

This sequence belongs to the TFIIE beta subunit family. In terms of assembly, tetramer of two alpha and two beta chains.

The protein resides in the nucleus. Functionally, recruits TFIIH to the initiation complex and stimulates the RNA polymerase II C-terminal domain kinase and DNA-dependent ATPase activities of TFIIH. Both TFIIH and TFIIE are required for promoter clearance by RNA polymerase. The sequence is that of General transcription factor IIE subunit 2 (gtf2e2) from Xenopus laevis (African clawed frog).